A 92-amino-acid polypeptide reads, in one-letter code: Conotoxin Im9.4 (92 aa).

The first 20 residues, 1–20 (MHRSLAGSAVLMLLLLFALG), serve as a signal peptide directing secretion. Positions 21–62 (NFVGVQPGLVTRDADNGQLMDNRRNLRLERKTMSLFKSLDKR) are excised as a propeptide. 3 cysteine pairs are disulfide-bonded: Cys-65–Cys-79, Cys-69–Cys-81, and Cys-75–Cys-87. Position 90 is an asparagine amide (Asn-90).

This sequence belongs to the conotoxin P superfamily. As to expression, expressed by the venom duct.

The protein localises to the secreted. In terms of biological role, probable neurotoxin that inhibits ion channels. This Conus imperialis (Imperial cone) protein is Conotoxin Im9.4.